Consider the following 130-residue polypeptide: Small ribosomal subunit protein uS8 (130 aa).

This sequence belongs to the universal ribosomal protein uS8 family. In terms of assembly, part of the 30S ribosomal subunit. Contacts proteins S5 and S12.

In terms of biological role, one of the primary rRNA binding proteins, it binds directly to 16S rRNA central domain where it helps coordinate assembly of the platform of the 30S subunit. This Psychromonas ingrahamii (strain DSM 17664 / CCUG 51855 / 37) protein is Small ribosomal subunit protein uS8.